The sequence spans 494 residues: Nuclear distribution protein PAC1 (494 aa).

Positions 14–46 (QKNELDKSVLRYLNWNYKQTVRHEHAQDYESVR) constitute a LisH domain. Residues 90–123 (NSIVRLQKKIIELEQNTETLVSQIKDLNTQVSEL) adopt a coiled-coil conformation. 7 WD repeats span residues 153-192 (NVESSVTSVKLHPNLPIVFVATDHGKLYAFDLFNYTIPLA), 196-244 (SHTK…CKFQ), 251-292 (GHEH…SLKT), 295-334 (PHSQWVRSIDVLGDYIISGSHDTTLRLTHWPSGNGLSVGT), 347-395 (HFIE…LMAH), 415-454 (GHLSWVRDISIRGQYLFSCADDKSVRCWDLNTGQCLHVWE), and 457-492 (HTGFVNCLDLDVDFDSNVTPRQMMVTGGLDCKSNVF).

It belongs to the WD repeat LIS1/nudF family. As to quaternary structure, self-associates. Interacts with NDL1 and dynein.

It localises to the cytoplasm. Its subcellular location is the cytoskeleton. It is found in the spindle pole. In terms of biological role, positively regulates the activity of the minus-end directed microtubule motor protein dynein. Plays a central role in positioning the mitotic spindle at the bud neck during cell division. Targets cytoplasmic dynein to microtubule plus ends, thereby promoting dynein-mediated microtubule sliding along the bud cortex and consequently the movement of the mitotic spindle to the bud neck. This Saccharomyces cerevisiae (strain Lalvin EC1118 / Prise de mousse) (Baker's yeast) protein is Nuclear distribution protein PAC1.